Reading from the N-terminus, the 205-residue chain is Disintegrin-like leberagin-C (205 aa).

The Disintegrin domain maps to 4–90; that stretch reads PPVCGNELLE…DCPIDRFHRN (87 aa). Disulfide bonds link cysteine 7–cysteine 26, cysteine 18–cysteine 36, cysteine 62–cysteine 82, cysteine 69–cysteine 94, cysteine 101–cysteine 106, cysteine 113–cysteine 128, cysteine 151–cysteine 158, cysteine 163–cysteine 171, and cysteine 193–cysteine 198. A D/ECD-tripeptide motif is present at residues 68–70; the sequence is ECD. Residue asparagine 120 is glycosylated (N-linked (GlcNAc...) asparagine).

Belongs to the venom metalloproteinase (M12B) family. P-III subfamily. P-IIIb sub-subfamily. As to quaternary structure, monomer. As to expression, expressed by the venom gland.

It localises to the secreted. Its function is as follows. Inhibits platelet aggregation induced by thrombin and arachidonic acid with IC(50) of 40 and 50 nM respectively (in rabbit platetelet-rich plasma). It also inhibits the adhesion of melanoma tumor cells on fibrinogen and fibronectin, by interfering with the function of alpha-V/beta-3 (ITGAV/ITGB3) and, to a lesser extent, with alpha-V/beta-6 (ITGAV/ITGB6) and alpha-5/beta-1 (ITGA5/ITGB1) integrins. The polypeptide is Disintegrin-like leberagin-C (Macrovipera lebetina transmediterranea (Blunt-nosed viper)).